The following is a 291-amino-acid chain: tRNA dimethylallyltransferase (291 aa).

17–24 contributes to the ATP binding site; that stretch reads GPTASGKS. Substrate is bound at residue 19–24; it reads TASGKS.

The protein belongs to the IPP transferase family. In terms of assembly, monomer. Mg(2+) serves as cofactor.

It carries out the reaction adenosine(37) in tRNA + dimethylallyl diphosphate = N(6)-dimethylallyladenosine(37) in tRNA + diphosphate. Catalyzes the transfer of a dimethylallyl group onto the adenine at position 37 in tRNAs that read codons beginning with uridine, leading to the formation of N6-(dimethylallyl)adenosine (i(6)A). This is tRNA dimethylallyltransferase from Cereibacter sphaeroides (strain ATCC 17025 / ATH 2.4.3) (Rhodobacter sphaeroides).